Consider the following 108-residue polypeptide: Large ribosomal subunit protein uL23 (108 aa).

It belongs to the universal ribosomal protein uL23 family. In terms of assembly, part of the 50S ribosomal subunit. Contacts protein L29, and trigger factor when it is bound to the ribosome.

One of the early assembly proteins it binds 23S rRNA. One of the proteins that surrounds the polypeptide exit tunnel on the outside of the ribosome. Forms the main docking site for trigger factor binding to the ribosome. This Polaromonas sp. (strain JS666 / ATCC BAA-500) protein is Large ribosomal subunit protein uL23.